A 139-amino-acid chain; its full sequence is Large-conductance mechanosensitive channel (139 aa).

2 consecutive transmembrane segments (helical) span residues 9 to 29 (AFAVKGNVVDMAVGIIIGAAF) and 79 to 99 (IQTVIDFVIVAFAIFMGVKAI).

Belongs to the MscL family. In terms of assembly, homopentamer.

Its subcellular location is the cell inner membrane. Functionally, channel that opens in response to stretch forces in the membrane lipid bilayer. May participate in the regulation of osmotic pressure changes within the cell. The chain is Large-conductance mechanosensitive channel from Pseudomonas putida (strain W619).